Here is a 299-residue protein sequence, read N- to C-terminus: Probable GTP 3',8-cyclase (299 aa).

In terms of domain architecture, Radical SAM core spans 4–229 (LHNREIKSLR…MQNRKKYLVD (226 aa)). R13 contacts GTP. [4Fe-4S] cluster contacts are provided by C20 and C24. Y26 lines the S-adenosyl-L-methionine pocket. C27 provides a ligand contact to [4Fe-4S] cluster. A GTP-binding site is contributed by K61. G65 contacts S-adenosyl-L-methionine. Position 94 (T94) interacts with GTP. Residue S118 coordinates S-adenosyl-L-methionine. A GTP-binding site is contributed by K154. Residues C245 and C248 each contribute to the [4Fe-4S] cluster site. 250 to 252 (RIR) serves as a coordination point for GTP. Position 262 (C262) interacts with [4Fe-4S] cluster.

Belongs to the radical SAM superfamily. MoaA family. [4Fe-4S] cluster serves as cofactor.

It catalyses the reaction GTP + AH2 + S-adenosyl-L-methionine = (8S)-3',8-cyclo-7,8-dihydroguanosine 5'-triphosphate + 5'-deoxyadenosine + L-methionine + A + H(+). It participates in cofactor biosynthesis; molybdopterin biosynthesis. Functionally, catalyzes the cyclization of GTP to (8S)-3',8-cyclo-7,8-dihydroguanosine 5'-triphosphate. The sequence is that of Probable GTP 3',8-cyclase from Methanococcus aeolicus (strain ATCC BAA-1280 / DSM 17508 / OCM 812 / Nankai-3).